The chain runs to 113 residues: Na(+)/H(+) antiporter subunit C1 (113 aa).

Helical transmembrane passes span 1 to 21, 28 to 48, and 72 to 92; these read MEII…YLVL, IVMG…TMGG, and LILT…VLAF.

This sequence belongs to the CPA3 antiporters (TC 2.A.63) subunit C family. May form a heterooligomeric complex that consists of seven subunits: mnhA1, mnhB1, mnhC1, mnhD1, mnhE1, mnhF1 and mnhG1.

Its subcellular location is the cell membrane. Functionally, mnh complex is a Na(+)/H(+) antiporter involved in Na(+) excretion. The sequence is that of Na(+)/H(+) antiporter subunit C1 (mnhC1) from Staphylococcus haemolyticus (strain JCSC1435).